Reading from the N-terminus, the 1033-residue chain is Collagen alpha-2(I) chain (1033 aa).

Positions 1–1033 (SGGFDFSFLP…FGYEGDFYRA (1033 aa)) are disordered. Low complexity-rich tracts occupy residues 25–71 (LGPG…ARGP), 154–175 (SRGS…SAGP), and 221–242 (PGAN…AGAP). Over residues 276 to 285 (GESGGKGEPG) the composition is skewed to gly residues. A compositionally biased stretch (low complexity) spans 286–296 (SAGPQGPPGSS). Over residues 318 to 327 (GLRGGPGSRG) the composition is skewed to gly residues. Composition is skewed to low complexity over residues 340 to 356 (PAGA…RGPS) and 391 to 410 (LPGI…RGEA). A compositionally biased stretch (gly residues) spans 459–468 (GVQGGKGEQG). Composition is skewed to low complexity over residues 519–528 (PSGAIGSRGP) and 540–550 (EPGVVGAPGTA). Residues 551–560 (GPAGSGGLPG) show a composition bias toward gly residues. Composition is skewed to low complexity over residues 583–627 (VGTT…PRGS) and 634–654 (VGPA…QPGA). The segment covering 655–664 (KGERGTKGPK) has biased composition (basic and acidic residues). Positions 672–682 (PTGPVGSAGPA) are enriched in low complexity. Over residues 692–701 (GSRGDGGPPG) the composition is skewed to gly residues. A compositionally biased stretch (low complexity) spans 703–712 (TGFPGAAGRT). Residues 749-758 (GETGAGGPPG) are compositionally biased toward gly residues. 2 stretches are compositionally biased toward low complexity: residues 766-793 (SGEP…LGLP) and 801-811 (LPGVAGAVGEP). Residues 812-834 (GPLGIGPPGARGPSGGVGPGVNG) are compositionally biased toward gly residues. Residues 873-909 (AAGAPGPHGAVGPAGKHGNRGEPGPVGSAGPVGALGP) are compositionally biased toward low complexity. Basic and acidic residues predominate over residues 919 to 930 (RGDKGEAGDKGP). Pro residues predominate over residues 1003–1015 (SGPPGPPGPPGPP).

It belongs to the fibrillar collagen family. In terms of assembly, trimers of one alpha 2(I) and two alpha 1(I) chains. Interacts (via C-terminus) with TMEM131 (via PapD-L domain); the interaction is direct and is involved in assembly and TRAPPIII ER-to-Golgi transport complex-dependent secretion of collagen. Post-translationally, prolines at the third position of the tripeptide repeating unit (G-X-Y) are hydroxylated in some or all of the chains. Expressed in bone.

It is found in the secreted. It localises to the extracellular space. The protein resides in the extracellular matrix. In terms of biological role, type I collagen is a member of group I collagen (fibrillar forming collagen). The sequence is that of Collagen alpha-2(I) chain from Mylodon darwinii (Giant ground sloth).